Here is a 492-residue protein sequence, read N- to C-terminus: Serine incorporator 4 (492 aa).

A run of 10 helical transmembrane segments spans residues 58-78, 113-133, 148-168, 179-199, 217-237, 254-274, 281-301, 330-350, 421-441, and 464-484; these read FYILLHMGASAICCLLLSKTV, AVYRVCAGTATFHLLQAVLLV, SFWSLKLLFLLGLCTAAFCIP, IGICGGFTFILLQLVLITAFA, FLGVLLATLGFYSMAGVGAVL, LLSLHLCFCGLLSLLSIAPCI, SGLLQASIISCYIMYLTFSAL, IPDASVAVFSASIMYACVLFA, GFHFAFFLASLYVMVTLTNWF, and VASCWACVLLYLGLLLAPLLA.

This sequence belongs to the TDE1 family.

It localises to the membrane. Its function is as follows. Incorporates a polar amino acid serine into membranes and facilitates the synthesis of two serine-derived lipids, phosphatidylserine and sphingolipids. The polypeptide is Serine incorporator 4 (Serinc4) (Rattus norvegicus (Rat)).